Reading from the N-terminus, the 220-residue chain is Adenylate kinase (220 aa).

10 to 15 contacts ATP; sequence GAGKGT. Residues 30–59 form an NMP region; it reads STGDMLRAAVKNCTPLGLKAKEIMDAGGLV. AMP contacts are provided by residues T31, R36, 57–59, 85–88, and Q92; these read GLV and GFPR. Residues 126 to 163 are LID; that stretch reads GRRTCPSCGKGFHVLFAPPRKAGVCDFCGADLVQRGDD. R127 serves as a coordination point for ATP. Zn(2+)-binding residues include C130, C133, C150, and C153. The AMP site is built by R160 and R171. ATP is bound at residue L199.

The protein belongs to the adenylate kinase family. In terms of assembly, monomer.

Its subcellular location is the cytoplasm. It catalyses the reaction AMP + ATP = 2 ADP. It functions in the pathway purine metabolism; AMP biosynthesis via salvage pathway; AMP from ADP: step 1/1. Catalyzes the reversible transfer of the terminal phosphate group between ATP and AMP. Plays an important role in cellular energy homeostasis and in adenine nucleotide metabolism. The chain is Adenylate kinase from Pelobacter propionicus (strain DSM 2379 / NBRC 103807 / OttBd1).